A 228-amino-acid chain; its full sequence is uncharacterized protein (228 aa).

This is an uncharacterized protein from Mycobacterium tuberculosis (strain CDC 1551 / Oshkosh).